Here is a 481-residue protein sequence, read N- to C-terminus: MSAKADIALIGLAVMGQNLVLNMNDKGFVVCAYNRTVEKVNQFLKNEAKGTNVIGATSLQDMVNKLKLPRKIMLLVKAGSAVDDFIQQLVPLLSPGDVIIDGGNSEYQDTARRCDELRAKKILYVGSGVSGGEEGARHGPSLMPGGHPEAWPLIQPIFQSICAKADKEPCCEWVGEGGAGHFVKMVHNGIEYGDMQLICEAYQIMKALGLSQAEMATEFEKWNSEELDSFLIEITRDILNYQDDRGYLLERIRDTAGQKGTGKWTAISALQYGVPVTLIGEAVFSRCLSALKDERVAASKQLKGPNVNAKVEDLPKFLNHIKHALYCSKIVSYAQGFMLMREAAKENNWNLNYGGIALMWRGGCIIRSVFLGNIKDAYTRNPQLSNLLLDDFFKKAIEVGQNSWRQVVANAFLWGIPVPALSTALSFYDGYRTEKLPANLLQAQRDYFGAHTYELLGAEGKFVHTNWTGTGGNVSASTYQA.

Residues 11 to 16 (GLAVMG), 34 to 36 (NRT), 76 to 78 (VKA), and asparagine 104 contribute to the NADP(+) site. Substrate contacts are provided by residues asparagine 104 and 130–132 (SGG). Lysine 184 (proton acceptor) is an active-site residue. 187–188 (HN) contacts substrate. Glutamate 191 serves as the catalytic Proton donor. Residues tyrosine 192, lysine 259, arginine 286, arginine 445, and histidine 451 each coordinate substrate.

This sequence belongs to the 6-phosphogluconate dehydrogenase family. As to quaternary structure, homodimer.

It carries out the reaction 6-phospho-D-gluconate + NADP(+) = D-ribulose 5-phosphate + CO2 + NADPH. The protein operates within carbohydrate degradation; pentose phosphate pathway; D-ribulose 5-phosphate from D-glucose 6-phosphate (oxidative stage): step 3/3. Functionally, catalyzes the oxidative decarboxylation of 6-phosphogluconate to ribulose 5-phosphate and CO(2), with concomitant reduction of NADP to NADPH. This chain is 6-phosphogluconate dehydrogenase, decarboxylating (Pgd), found in Ceratitis capitata (Mediterranean fruit fly).